Here is a 124-residue protein sequence, read N- to C-terminus: uncharacterized protein (124 aa).

The N-terminal stretch at 1 to 18 (MHIIKTLISVGVAFSLSA) is a signal peptide. The N-palmitoyl cysteine moiety is linked to residue cysteine 19. The S-diacylglycerol cysteine moiety is linked to residue cysteine 19.

It is found in the cell membrane. This is an uncharacterized protein from Pasteurella multocida (strain Pm70).